Reading from the N-terminus, the 505-residue chain is Alpha-internexin (505 aa).

The segment at 1–87 (MSFGSEHYLC…SQAAARTNEY (87 aa)) is head. At serine 72 the chain carries Phosphoserine. Positions 88–129 (KIIRTNEKEQLQGLNDRFAVFIEKVHQLETQNRALEAELAAL) are coil 1A. The IF rod domain occupies 94–407 (EKEQLQGLND…KLLEGEETRF (314 aa)). Residues 130–142 (RQRHAEPSRVGEL) form a linker 1 region. Residues 143–238 (FQRELRELRA…QVHDEEVAEL (96 aa)) form a coil 1B region. Residue serine 219 is modified to Phosphoserine. The linker 2 stretch occupies residues 239-262 (LATLQASSQAAAEVDVAVAKPDLT). Positions 263-408 (SALREIRAQY…LLEGEETRFS (146 aa)) are coil 2. Lysine 290 carries the N6-acetyllysine modification. Serine 335, serine 474, and serine 502 each carry phosphoserine. The segment at 409–505 (TSGLSISGLN…EITTSSSQKM (97 aa)) is tail. The segment at 438–505 (KVSSAGLSLK…EITTSSSQKM (68 aa)) is disordered. The span at 495 to 505 (EEITTSSSQKM) shows a compositional bias: low complexity.

Belongs to the intermediate filament family. As to quaternary structure, forms homodimers (in vitro). Forms heterodimers with NEFL, NEFM or NEFH (in vitro). In terms of processing, O-glycosylated. In terms of tissue distribution, expressed in the dorsal root ganglion neurons (at protein level).

In terms of biological role, class-IV neuronal intermediate filament that is able to self-assemble. It is involved in the morphogenesis of neurons. It may form an independent structural network without the involvement of other neurofilaments or it may cooperate with NEFL to form the filamentous backbone to which NEFM and NEFH attach to form the cross-bridges. May also cooperate with the neuronal intermediate filament protein PRPH to form filamentous networks. The sequence is that of Alpha-internexin (Ina) from Rattus norvegicus (Rat).